Consider the following 152-residue polypeptide: Ribosome maturation factor RimP (152 aa).

The protein belongs to the RimP family.

The protein resides in the cytoplasm. Required for maturation of 30S ribosomal subunits. The protein is Ribosome maturation factor RimP of Shigella boydii serotype 4 (strain Sb227).